The primary structure comprises 365 residues: Chorismate synthase (365 aa).

Arg-46 is an NADP(+) binding site. FMN-binding positions include 123 to 125 (RSS), 241 to 242 (NG), Gly-281, 296 to 300 (KPTPS), and Arg-322.

Belongs to the chorismate synthase family. Homotetramer. FMNH2 is required as a cofactor.

The enzyme catalyses 5-O-(1-carboxyvinyl)-3-phosphoshikimate = chorismate + phosphate. It functions in the pathway metabolic intermediate biosynthesis; chorismate biosynthesis; chorismate from D-erythrose 4-phosphate and phosphoenolpyruvate: step 7/7. In terms of biological role, catalyzes the anti-1,4-elimination of the C-3 phosphate and the C-6 proR hydrogen from 5-enolpyruvylshikimate-3-phosphate (EPSP) to yield chorismate, which is the branch point compound that serves as the starting substrate for the three terminal pathways of aromatic amino acid biosynthesis. This reaction introduces a second double bond into the aromatic ring system. The sequence is that of Chorismate synthase from Helicobacter pylori (strain J99 / ATCC 700824) (Campylobacter pylori J99).